The sequence spans 262 residues: Type III pantothenate kinase (262 aa).

5-12 contributes to the ATP binding site; sequence DAGNTRSK. Substrate contacts are provided by residues tyrosine 102 and 110-113; that span reads GSDR. The active-site Proton acceptor is aspartate 112. K(+) is bound at residue aspartate 132. Threonine 135 provides a ligand contact to ATP. Position 190 (threonine 190) interacts with substrate.

It belongs to the type III pantothenate kinase family. Homodimer. It depends on NH4(+) as a cofactor. K(+) is required as a cofactor.

The protein resides in the cytoplasm. It carries out the reaction (R)-pantothenate + ATP = (R)-4'-phosphopantothenate + ADP + H(+). It functions in the pathway cofactor biosynthesis; coenzyme A biosynthesis; CoA from (R)-pantothenate: step 1/5. Its function is as follows. Catalyzes the phosphorylation of pantothenate (Pan), the first step in CoA biosynthesis. This Idiomarina loihiensis (strain ATCC BAA-735 / DSM 15497 / L2-TR) protein is Type III pantothenate kinase.